A 155-amino-acid chain; its full sequence is MSRRGTTEEKTAKSDPIYRNRLVNMLVNRILKHGKKSLAYQIIYRAVKKIQQKTETNPLSVLRQAIRGVTPDIAVKARRVGGSTHQVPIEIGSTQGKALAIRWLLWASRKRPGRNMAFKLSSELLDAAKGSGDAIRKKEETHRMAEANRAFAHFR.

It belongs to the universal ribosomal protein uS7 family. As to quaternary structure, part of the 30S ribosomal subunit.

The protein resides in the plastid. The protein localises to the chloroplast. In terms of biological role, one of the primary rRNA binding proteins, it binds directly to 16S rRNA where it nucleates assembly of the head domain of the 30S subunit. The polypeptide is Small ribosomal subunit protein uS7c (rps7) (Houttuynia cordata (Chameleon plant)).